The chain runs to 229 residues: MDSSDRPSLRQRLSNWGRTDTKPAATDLTAPPNDPSENMELPPLPPVELLGYSHSTRTKIMTTELADEIRNLVPERIKLYRSWQLQYSLEQHGTSLTTLYHRNIPPHGDTARNGFVLAVKNSRGQVFGAYTDQHYHVGGKKFYGNGDCFLWKVKNADSFQAFPYTGENNFVVYCNPHFLSLGGGDGKYGLWLDDALKTGVTYPCATFGNEPLGDEKFDVVAVEVWRVGE.

Residues 1-44 are disordered; the sequence is MDSSDRPSLRQRLSNWGRTDTKPAATDLTAPPNDPSENMELPPL. One can recognise a TLDc domain in the interval 59 to 228; it reads KIMTTELADE…VVAVEVWRVG (170 aa).

This sequence belongs to the OXR1 family.

The protein resides in the mitochondrion. May be involved in protection from oxidative damage. This chain is Oxidation resistance protein 1 (OXR1), found in Yarrowia lipolytica (strain CLIB 122 / E 150) (Yeast).